A 334-amino-acid chain; its full sequence is Heat-inducible transcription repressor HrcA (334 aa).

The protein belongs to the HrcA family.

Functionally, negative regulator of class I heat shock genes (grpE-dnaK-dnaJ and groELS operons). Prevents heat-shock induction of these operons. The protein is Heat-inducible transcription repressor HrcA of Verminephrobacter eiseniae (strain EF01-2).